The following is a 275-amino-acid chain: Membrane protein insertase YidC (275 aa).

Positions 1 to 22 (MKKYKRLLLMAGLVTLVFVLSA) are cleaved as a signal peptide. The N-palmitoyl cysteine moiety is linked to residue Cys23. The S-diacylglycerol cysteine moiety is linked to residue Cys23. Transmembrane regions (helical) follow at residues 53–73 (LGGS…IILL), 127–147 (YIGC…YQAI), 169–189 (YLIL…LSSM), and 206–226 (PAMI…YWVV). Positions 249 to 266 (EEAARQAKARERALERAK) are enriched in basic and acidic residues. A disordered region spans residues 249-275 (EEAARQAKARERALERAKSPKKKGKKK).

Belongs to the OXA1/ALB3/YidC family. Type 2 subfamily.

It is found in the cell membrane. Required for the insertion and/or proper folding and/or complex formation of integral membrane proteins into the membrane. Involved in integration of membrane proteins that insert both dependently and independently of the Sec translocase complex, as well as at least some lipoproteins. The chain is Membrane protein insertase YidC from Enterococcus faecalis (strain ATCC 700802 / V583).